The primary structure comprises 412 residues: Short-chain specific acyl-CoA dehydrogenase, mitochondrial (412 aa).

The transit peptide at 1 to 24 (MAATLLARACGLVRGAPWPWGWRR) directs the protein to the mitochondrion. At Thr27 the chain carries Phosphothreonine. Lys51 carries the N6-acetyllysine; alternate modification. Position 51 is an N6-succinyllysine; alternate (Lys51). Lys72 bears the N6-acetyllysine mark. Lys129 is subject to N6-acetyllysine; alternate. Residue Lys129 is modified to N6-succinyllysine; alternate. FAD-binding positions include 152-161 (FALSEPGNGS) and 185-187 (WIT). Position 161 (Ser161) interacts with substrate. Residue Lys208 is modified to N6-acetyllysine. N6-acetyllysine; alternate is present on Lys262. An N6-succinyllysine; alternate modification is found at Lys262. 269 to 272 (DTGR) serves as a coordination point for substrate. Position 297 (Arg297) interacts with FAD. Lys306 bears the N6-acetyllysine; alternate mark. At Lys306 the chain carries N6-succinyllysine; alternate. FAD contacts are provided by residues Gln308 and 365 to 369 (QILGG). Glu392 serves as the catalytic Proton acceptor. Gly393 contacts substrate. An FAD-binding site is contributed by 394 to 396 (TSE).

This sequence belongs to the acyl-CoA dehydrogenase family. Homotetramer. The cofactor is FAD.

The protein localises to the mitochondrion matrix. The enzyme catalyses a short-chain 2,3-saturated fatty acyl-CoA + oxidized [electron-transfer flavoprotein] + H(+) = a short-chain (2E)-enoyl-CoA + reduced [electron-transfer flavoprotein]. It carries out the reaction butanoyl-CoA + oxidized [electron-transfer flavoprotein] + H(+) = (2E)-butenoyl-CoA + reduced [electron-transfer flavoprotein]. The catalysed reaction is pentanoyl-CoA + oxidized [electron-transfer flavoprotein] + H(+) = (2E)-pentenoyl-CoA + reduced [electron-transfer flavoprotein]. It catalyses the reaction hexanoyl-CoA + oxidized [electron-transfer flavoprotein] + H(+) = (2E)-hexenoyl-CoA + reduced [electron-transfer flavoprotein]. It functions in the pathway lipid metabolism; mitochondrial fatty acid beta-oxidation. Short-chain specific acyl-CoA dehydrogenase is one of the acyl-CoA dehydrogenases that catalyze the first step of mitochondrial fatty acid beta-oxidation, an aerobic process breaking down fatty acids into acetyl-CoA and allowing the production of energy from fats. The first step of fatty acid beta-oxidation consists in the removal of one hydrogen from C-2 and C-3 of the straight-chain fatty acyl-CoA thioester, resulting in the formation of trans-2-enoyl-CoA. Among the different mitochondrial acyl-CoA dehydrogenases, short-chain specific acyl-CoA dehydrogenase acts specifically on acyl-CoAs with saturated 4 to 6 carbons long primary chains. This Bos taurus (Bovine) protein is Short-chain specific acyl-CoA dehydrogenase, mitochondrial (ACADS).